The sequence spans 291 residues: Acetyl-coenzyme A carboxylase carboxyl transferase subunit beta (291 aa).

In terms of domain architecture, CoA carboxyltransferase N-terminal spans 34–291; sequence MWTKCSNCNS…LILHGVNKYE (258 aa). 4 residues coordinate Zn(2+): C38, C41, C57, and C60. The C4-type zinc-finger motif lies at 38–60; sequence CSNCNSMIYYEDLENNKYVCTKC.

The protein belongs to the AccD/PCCB family. In terms of assembly, acetyl-CoA carboxylase is a heterohexamer composed of biotin carboxyl carrier protein (AccB), biotin carboxylase (AccC) and two subunits each of ACCase subunit alpha (AccA) and ACCase subunit beta (AccD). Requires Zn(2+) as cofactor.

The protein resides in the cytoplasm. The enzyme catalyses N(6)-carboxybiotinyl-L-lysyl-[protein] + acetyl-CoA = N(6)-biotinyl-L-lysyl-[protein] + malonyl-CoA. The protein operates within lipid metabolism; malonyl-CoA biosynthesis; malonyl-CoA from acetyl-CoA: step 1/1. In terms of biological role, component of the acetyl coenzyme A carboxylase (ACC) complex. Biotin carboxylase (BC) catalyzes the carboxylation of biotin on its carrier protein (BCCP) and then the CO(2) group is transferred by the transcarboxylase to acetyl-CoA to form malonyl-CoA. The protein is Acetyl-coenzyme A carboxylase carboxyl transferase subunit beta of Clostridium botulinum (strain Alaska E43 / Type E3).